The chain runs to 114 residues: Amphinase-4 (114 aa).

H15 serves as the catalytic Proton acceptor. Disulfide bonds link C26–C79, C41–C85, C59–C100, and C97–C114. A glycan (N-linked (GlcNAc...) asparagine) is linked at N27. Residue 42-46 (KPVNT) coordinates substrate. N67 and N91 each carry an N-linked (GlcNAc...) asparagine glycan. Residue H107 is the Proton donor of the active site.

Belongs to the pancreatic ribonuclease family. In terms of assembly, monomer. Post-translationally, there are at least five different forms arising from glycan heterogeneity.

The protein localises to the secreted. Functionally, endonuclease, hydrolyzes highly polymerized RNA, poly(U) and poly(C), and the dinucleotides CpA and UpA. Hydrolyzes rCA, rUA and rUG. Has cytotoxic activity against cultured human submaxillary gland carcinoma cells. The chain is Amphinase-4 from Lithobates pipiens (Northern leopard frog).